A 494-amino-acid chain; its full sequence is Guanosine-5'-triphosphate,3'-diphosphate pyrophosphatase (494 aa).

The protein belongs to the GppA/Ppx family. GppA subfamily.

It catalyses the reaction guanosine 3'-diphosphate 5'-triphosphate + H2O = guanosine 3',5'-bis(diphosphate) + phosphate + H(+). It participates in purine metabolism; ppGpp biosynthesis; ppGpp from GTP: step 2/2. In terms of biological role, catalyzes the conversion of pppGpp to ppGpp. Guanosine pentaphosphate (pppGpp) is a cytoplasmic signaling molecule which together with ppGpp controls the 'stringent response', an adaptive process that allows bacteria to respond to amino acid starvation, resulting in the coordinated regulation of numerous cellular activities. This is Guanosine-5'-triphosphate,3'-diphosphate pyrophosphatase from Escherichia coli O139:H28 (strain E24377A / ETEC).